Here is a 291-residue protein sequence, read N- to C-terminus: Putative GATA transcription factor 13 (291 aa).

The GATA-type zinc finger occupies Lys187–Pro241. Positions Thr271–Gln291 are disordered.

It belongs to the type IV zinc-finger family. Class A subfamily.

It is found in the nucleus. Functionally, transcriptional activator that specifically binds 5'-GATA-3' or 5'-GAT-3' motifs within gene promoters. May be involved in the regulation of some light-responsive genes. This chain is Putative GATA transcription factor 13 (GATA13), found in Arabidopsis thaliana (Mouse-ear cress).